The chain runs to 598 residues: Aspartate--tRNA(Asp/Asn) ligase (598 aa).

Glu-173 contributes to the L-aspartate binding site. Positions Gln-197–Lys-200 are aspartate. Arg-219 contributes to the L-aspartate binding site. ATP is bound by residues Arg-219–Glu-221 and Gln-228. Residue His-448 coordinates L-aspartate. Glu-482 serves as a coordination point for ATP. Arg-489 is a binding site for L-aspartate. Gly-534–Arg-537 contacts ATP. The disordered stretch occupies residues Gly-560–Ala-598. Basic and acidic residues predominate over residues Gln-575–Ala-591.

It belongs to the class-II aminoacyl-tRNA synthetase family. Type 1 subfamily. As to quaternary structure, homodimer.

The protein localises to the cytoplasm. It carries out the reaction tRNA(Asx) + L-aspartate + ATP = L-aspartyl-tRNA(Asx) + AMP + diphosphate. In terms of biological role, aspartyl-tRNA synthetase with relaxed tRNA specificity since it is able to aspartylate not only its cognate tRNA(Asp) but also tRNA(Asn). Reaction proceeds in two steps: L-aspartate is first activated by ATP to form Asp-AMP and then transferred to the acceptor end of tRNA(Asp/Asn). In Kineococcus radiotolerans (strain ATCC BAA-149 / DSM 14245 / SRS30216), this protein is Aspartate--tRNA(Asp/Asn) ligase.